The chain runs to 40 residues: U1-ectatotoxin-Eb1a subunit A (40 aa).

Belongs to the ectatomin family. Ectatomin-Eq subfamily. Heterodimer of subunits A and B; disulfide-linked. As to expression, expressed by the venom gland.

The protein resides in the secreted. It is found in the target cell membrane. The sequence is that of U1-ectatotoxin-Eb1a subunit A from Ectatomma brunneum (Ant).